Reading from the N-terminus, the 329-residue chain is MQNLKQITEQARAALDELHDKGIEALENFRVEYFGKKGHFTQLMQGLRDVLPEERPAMGAKINEAKQTVLEILNAKKEQIEQAALNVKLEQERIDVSLPGRKVEAGGLHPVSITIGRVTKFFSELGFSVESGPEIESDYYNFDALNIPKHHPARADHDTFWFNPELLLRTQTSGVQIRTMEKKQPPIRIMAPGRVYRNDYDQTHTPMFHQIELLYVDKNANFTELKGLLHDFLRAFFEEDLQVRFRPSYFPFTEPSAEVDVMGKNGKWLEVLGCGMVHPNVLRNVGIDPNEYSGFAVGMGVERLTMLRYNVTDLRSFFENDLRFLKQFK.

Residue Glu-254 participates in Mg(2+) binding.

Belongs to the class-II aminoacyl-tRNA synthetase family. Phe-tRNA synthetase alpha subunit type 1 subfamily. As to quaternary structure, tetramer of two alpha and two beta subunits. Mg(2+) serves as cofactor.

The protein localises to the cytoplasm. The enzyme catalyses tRNA(Phe) + L-phenylalanine + ATP = L-phenylalanyl-tRNA(Phe) + AMP + diphosphate + H(+). The protein is Phenylalanine--tRNA ligase alpha subunit of Actinobacillus succinogenes (strain ATCC 55618 / DSM 22257 / CCUG 43843 / 130Z).